Consider the following 175-residue polypeptide: ATP synthase subunit delta (175 aa).

Belongs to the ATPase delta chain family. As to quaternary structure, F-type ATPases have 2 components, F(1) - the catalytic core - and F(0) - the membrane proton channel. F(1) has five subunits: alpha(3), beta(3), gamma(1), delta(1), epsilon(1). F(0) has three main subunits: a(1), b(2) and c(10-14). The alpha and beta chains form an alternating ring which encloses part of the gamma chain. F(1) is attached to F(0) by a central stalk formed by the gamma and epsilon chains, while a peripheral stalk is formed by the delta and b chains.

It localises to the cell membrane. Its function is as follows. F(1)F(0) ATP synthase produces ATP from ADP in the presence of a proton or sodium gradient. F-type ATPases consist of two structural domains, F(1) containing the extramembraneous catalytic core and F(0) containing the membrane proton channel, linked together by a central stalk and a peripheral stalk. During catalysis, ATP synthesis in the catalytic domain of F(1) is coupled via a rotary mechanism of the central stalk subunits to proton translocation. This protein is part of the stalk that links CF(0) to CF(1). It either transmits conformational changes from CF(0) to CF(1) or is implicated in proton conduction. This chain is ATP synthase subunit delta, found in Lactococcus lactis subsp. cremoris (strain MG1363).